A 387-amino-acid polypeptide reads, in one-letter code: Penicillopepsin-1 (387 aa).

The first 19 residues, 1–19 (MVNSKTVVSALALSALAAA), serve as a signal peptide directing secretion. Residues 20-66 (APAPSSTTSFSINQVAVKKPAIHPAVKYAKALAKYHAEIPSNVASAA) constitute a propeptide, activation peptide. The Peptidase A1 domain maps to 85 to 384 (YVTPITAGSS…DGDNLQLGFA (300 aa)). Active-site residues include Asp-101 and Asp-279. A glycan (N-linked (GlcNAc...) asparagine) is linked at Asn-304. Cysteines 315 and 347 form a disulfide.

Belongs to the peptidase A1 family. As to quaternary structure, monomer.

It localises to the secreted. The enzyme catalyses Hydrolysis of proteins with broad specificity similar to that of pepsin A, preferring hydrophobic residues at P1 and P1', but also cleaving 20-Gly-|-Glu-21 in the B chain of insulin. Clots milk, and activates trypsinogen.. Secreted aspartic endopeptidase that allows assimilation of proteinaceous substrates. The scissile peptide bond is attacked by a nucleophilic water molecule activated by two aspartic residues in the active site. Shows a broad primary substrate specificity. Favors hydrophobic residues at the P1 and P1' positions, but can also activate trypsinogen and hydrolyze the B chain of insulin between positions 'Gly-20' and 'Glu-21'. In Talaromyces stipitatus (strain ATCC 10500 / CBS 375.48 / QM 6759 / NRRL 1006) (Penicillium stipitatum), this protein is Penicillopepsin-1 (pepA).